A 221-amino-acid polypeptide reads, in one-letter code: Glutathione S-transferase class-mu 26 kDa isozyme 1 (221 aa).

Positions 2–82 (PAKLGYWKIR…YIADKHGMIG (81 aa)) constitute a GST N-terminal domain. Residues 7 to 8 (YW), 40 to 44 (WFSKK), 53 to 54 (NL), and 66 to 67 (QS) contribute to the glutathione site. In terms of domain architecture, GST C-terminal spans 84–202 (TPEERARVSM…ESNRFIKWPL (119 aa)). Residue tyrosine 110 coordinates substrate.

It belongs to the GST superfamily. Mu family. In terms of assembly, homodimer.

It catalyses the reaction RX + glutathione = an S-substituted glutathione + a halide anion + H(+). Functionally, conjugation of reduced glutathione to a wide number of exogenous and endogenous hydrophobic electrophiles. GST isoenzymes appear to play a central role in the parasite detoxification system. Other functions are also suspected including a role in increasing the solubility of haematin in the parasite gut. This Fasciola hepatica (Liver fluke) protein is Glutathione S-transferase class-mu 26 kDa isozyme 1.